The sequence spans 301 residues: Phosphate transport system permease protein PstA 2 (301 aa).

The next 6 helical transmembrane spans lie at 36-56 (ACVCCLAVVITPTLWMLIGVV), 83-103 (IIGTAVLAIGVILVGGTVSVL), 127-147 (LSGIPSIVLGYVGYLALVVYF), 149-169 (WGFSLAAGVLVLSVMSIPYIA), 209-229 (GIVTGMLVALALAIGETAPLL), and 274-294 (ALLLIVFLLLLIFIGRLINWL). In terms of domain architecture, ABC transmembrane type-1 spans 83-288 (IIGTAVLAIG…VFLLLLIFIG (206 aa)).

The protein belongs to the binding-protein-dependent transport system permease family. CysTW subfamily.

Its subcellular location is the cell membrane. In terms of biological role, part of the binding-protein-dependent transport system for phosphate; probably responsible for the translocation of the substrate across the membrane. This is Phosphate transport system permease protein PstA 2 (pstA2) from Mycobacterium bovis (strain ATCC BAA-935 / AF2122/97).